A 156-amino-acid polypeptide reads, in one-letter code: Small ribosomal subunit protein uS7 (156 aa).

Belongs to the universal ribosomal protein uS7 family. In terms of assembly, part of the 30S ribosomal subunit. Contacts proteins S9 and S11.

Its function is as follows. One of the primary rRNA binding proteins, it binds directly to 16S rRNA where it nucleates assembly of the head domain of the 30S subunit. Is located at the subunit interface close to the decoding center, probably blocks exit of the E-site tRNA. In Leuconostoc citreum (strain KM20), this protein is Small ribosomal subunit protein uS7.